A 662-amino-acid chain; its full sequence is UvrABC system protein B (662 aa).

One can recognise a Helicase ATP-binding domain in the interval 31 to 188; the sequence is DNIEGGEKAQ…NDLVDIQFER (158 aa). An ATP-binding site is contributed by 44 to 51; the sequence is GATGTGKT. Residues 97-120 carry the Beta-hairpin motif; that stretch reads YYDYYQPEAYVPSSDTYIEKDSSV. Residues 435-601 enclose the Helicase C-terminal domain; that stretch reads QIDDLLGEIN…TIKKEIRDLI (167 aa). Positions 626–661 constitute a UVR domain; it reads KELVKKLEKQMQEAVEVLDFELAAQIRDMMLEVKAL.

Belongs to the UvrB family. Forms a heterotetramer with UvrA during the search for lesions. Interacts with UvrC in an incision complex.

The protein localises to the cytoplasm. Its function is as follows. The UvrABC repair system catalyzes the recognition and processing of DNA lesions. A damage recognition complex composed of 2 UvrA and 2 UvrB subunits scans DNA for abnormalities. Upon binding of the UvrA(2)B(2) complex to a putative damaged site, the DNA wraps around one UvrB monomer. DNA wrap is dependent on ATP binding by UvrB and probably causes local melting of the DNA helix, facilitating insertion of UvrB beta-hairpin between the DNA strands. Then UvrB probes one DNA strand for the presence of a lesion. If a lesion is found the UvrA subunits dissociate and the UvrB-DNA preincision complex is formed. This complex is subsequently bound by UvrC and the second UvrB is released. If no lesion is found, the DNA wraps around the other UvrB subunit that will check the other stand for damage. This Streptococcus pneumoniae serotype 19F (strain G54) protein is UvrABC system protein B.